We begin with the raw amino-acid sequence, 71 residues long: uncharacterized protein (71 aa).

This is an uncharacterized protein from Lepidoptera (butterflies and moths).